Consider the following 409-residue polypeptide: Casein kinase I isoform delta-B (409 aa).

Residues 9–277 enclose the Protein kinase domain; it reads YRLGRKIGSG…YLRQLFRNLF (269 aa). ATP is bound by residues 15–23 and lysine 38; that span reads IGSGSFGDI. Residue aspartate 128 is the Proton acceptor of the active site. Over residues 300 to 315 the composition is skewed to basic and acidic residues; it reads TAEEADRERRERDERM. The interval 300–409 is disordered; that stretch reads TAEEADRERR…NSIPFDHHGK (110 aa). An autoinhibitory region spans residues 317–341; that stretch reads HSRNPAARGIPAASGRPRPTQDGAP. Composition is skewed to polar residues over residues 346–358 and 380–402; these read TPTSHTANTSSPR and NVSSSDLTGRQDTSRMSTSQNSI.

The protein belongs to the protein kinase superfamily. Monomer. Interacts with per1 and per2. Component of the circadian core oscillator. Post-translationally, autophosphorylated on serine and threonine residues.

Its subcellular location is the cytoplasm. It is found in the nucleus. The enzyme catalyses L-seryl-[protein] + ATP = O-phospho-L-seryl-[protein] + ADP + H(+). It catalyses the reaction L-threonyl-[protein] + ATP = O-phospho-L-threonyl-[protein] + ADP + H(+). Exhibits substrate-dependent heparin activation. Its function is as follows. Casein kinases are operationally defined by their preferential utilization of acidic proteins such as caseins as substrates. Central component of the circadian clock. May act as a negative regulator of circadian rhythmicity by phosphorylating per1 and per2, which may lead to their degradation. Participates in wnt signaling. This chain is Casein kinase I isoform delta-B (csnk1db), found in Danio rerio (Zebrafish).